The sequence spans 240 residues: Probable ATP synthase 24 kDa subunit, mitochondrial (240 aa).

Residues 1-32 (MAYASRFLSRSKQLQGGLVILQQQHAIPVRAF) constitute a mitochondrion transit peptide. 2 stretches are compositionally biased toward basic and acidic residues: residues 210-222 (AVEA…KKEE) and 229-240 (PDVKSLDIRNFI). Residues 210-240 (AVEAMESQKKKEEFQDEEMPDVKSLDIRNFI) are disordered.

Its subcellular location is the mitochondrion. The protein resides in the mitochondrion inner membrane. In terms of biological role, mitochondrial membrane ATP synthase (F(1)F(0) ATP synthase or Complex V) produces ATP from ADP in the presence of a proton gradient across the membrane which is generated by electron transport complexes of the respiratory chain. F-type ATPases consist of two structural domains, F(1) - containing the extramembraneous catalytic core and F(0) - containing the membrane proton channel, linked together by a central stalk and a peripheral stalk. During catalysis, ATP synthesis in the catalytic domain of F(1) is coupled via a rotary mechanism of the central stalk subunits to proton translocation. Part of the complex F(0) domain. In Arabidopsis thaliana (Mouse-ear cress), this protein is Probable ATP synthase 24 kDa subunit, mitochondrial.